The primary structure comprises 581 residues: Prolactin receptor (581 aa).

The signal sequence occupies residues 1–24 (MKENAASRVVFILLLFLSVSLLNG). Residues 25–237 (QSPPEKPKLV…NDFPVKDTSM (213 aa)) are Extracellular-facing. 2 Fibronectin type-III domains span residues 27–127 (PPEK…IVEP) and 129–229 (PPAN…IPND). An intrachain disulfide couples Cys-36 to Cys-46. N-linked (GlcNAc...) asparagine glycosylation occurs at Asn-59. Cys-75 and Cys-86 are oxidised to a cystine. A glycan (N-linked (GlcNAc...) asparagine) is linked at Asn-132. Zn(2+) is bound by residues Asp-211 and His-212. A WSXWS motif motif is present at residues 215–219 (WSEWS). A helical transmembrane segment spans residues 238–258 (WIFVAILSAVICLIMVWAVAL). The Cytoplasmic segment spans residues 259 to 581 (KGYSMVTCIL…PAKKAPPALP (323 aa)). Positions 267 to 275 (ILPPVPGPK) match the Box 1 motif motif. Disordered regions lie at residues 324–384 (QLMP…EKLE) and 458–499 (DQHA…PRPQ). Basic and acidic residues-rich tracts occupy residues 329–349 (PSKEHTEQGVKPMHLDLDSDS), 375–384 (HTPEGPEKLE), and 469–483 (ETGREGKATKQRESE).

It belongs to the type I cytokine receptor family. Type 1 subfamily. In terms of assembly, interacts with SMARCA1. Interacts with NEK3 and VAV2 and this interaction is prolactin-dependent. As to expression, expressed in all tissues examined; liver, peripheral blood lymphocytes, endometrium, corpus luteum, intestine, fetal thymus, fetal spleen, fetal liver and fetal brain.

It localises to the membrane. In terms of biological role, this is a receptor for the anterior pituitary hormone prolactin. This chain is Prolactin receptor (PRLR), found in Bos taurus (Bovine).